A 217-amino-acid polypeptide reads, in one-letter code: Insulin-like growth factor 2.L (217 aa).

The first 56 residues, M1 to A56, serve as a signal peptide directing secretion. The b stretch occupies residues Y57–F83. Cystine bridges form between C64-C103, C76-C116, and C102-C107. The tract at residues S84–R96 is c. Residues G97–A117 are a. Residues K118 to E123 are d. A propeptide spans R124–N217 (e peptide).

Belongs to the insulin family.

It is found in the secreted. Functionally, the insulin-like growth factors, isolated from plasma, are structurally and functionally related to insulin but have a much higher growth-promoting activity. Promotes anterior neural development. Acts as a ligand for integrin which is required for IGF2 signaling. The chain is Insulin-like growth factor 2.L from Xenopus laevis (African clawed frog).